A 199-amino-acid polypeptide reads, in one-letter code: MPKILVLYYSTYGHIETMAEAIAEGARSAGAEVDVKRVPETVPLDIAEKNHFKLDQKAPVATVAELEDYDAIIVGTGTRFGRMSSQMAAFLDGAGGLWARGALNGKVGAAFASTATQHGGQETTLFSIITNLLHFGMTIVGLPYAYQGQMGVDEVKGGAPYGATTIADGDGSRQPSATDLDGARFQGRHVAEITAKLVG.

The 187-residue stretch at 4–190 (ILVLYYSTYG…DGARFQGRHV (187 aa)) folds into the Flavodoxin-like domain. FMN contacts are provided by residues 10–15 (STYGHI) and 78–80 (TRF). An NAD(+)-binding site is contributed by tyrosine 12. Substrate is bound at residue tryptophan 98. FMN-binding positions include 113-119 (STATQHG) and histidine 134.

The protein belongs to the WrbA family. The cofactor is FMN.

It catalyses the reaction a quinone + NADH + H(+) = a quinol + NAD(+). It carries out the reaction a quinone + NADPH + H(+) = a quinol + NADP(+). The chain is NAD(P)H dehydrogenase (quinone) from Rhizorhabdus wittichii (strain DSM 6014 / CCUG 31198 / JCM 15750 / NBRC 105917 / EY 4224 / RW1) (Sphingomonas wittichii).